The sequence spans 222 residues: Salivary anticoagulant protein P23 (222 aa).

An N-terminal signal peptide occupies residues 1–17; that stretch reads MLTVSLLTLSLAAYASA. 4 N-linked (GlcNAc...) asparagine glycosylation sites follow: asparagine 56, asparagine 73, asparagine 109, and asparagine 114.

In terms of tissue distribution, salivary gland (at protein level). Adult midgut.

It is found in the secreted. Functionally, inhibits host coagulation by delaying thrombin generation and reducing endogenous thrombin potential (ETP). The chain is Salivary anticoagulant protein P23 from Ixodes scapularis (Black-legged tick).